Here is a 208-residue protein sequence, read N- to C-terminus: Ribosomal RNA large subunit methyltransferase E (208 aa).

5 residues coordinate S-adenosyl-L-methionine: Gly63, Trp65, Asp83, Asp99, and Asp124. Lys164 functions as the Proton acceptor in the catalytic mechanism.

Belongs to the class I-like SAM-binding methyltransferase superfamily. RNA methyltransferase RlmE family.

It is found in the cytoplasm. It catalyses the reaction uridine(2552) in 23S rRNA + S-adenosyl-L-methionine = 2'-O-methyluridine(2552) in 23S rRNA + S-adenosyl-L-homocysteine + H(+). In terms of biological role, specifically methylates the uridine in position 2552 of 23S rRNA at the 2'-O position of the ribose in the fully assembled 50S ribosomal subunit. The sequence is that of Ribosomal RNA large subunit methyltransferase E from Salmonella choleraesuis (strain SC-B67).